The sequence spans 150 residues: Large ribosomal subunit protein bL9 (150 aa).

This sequence belongs to the bacterial ribosomal protein bL9 family.

Binds to the 23S rRNA. The polypeptide is Large ribosomal subunit protein bL9 (Burkholderia multivorans (strain ATCC 17616 / 249)).